Consider the following 830-residue polypeptide: Adhesion G protein-coupled receptor E2 (830 aa).

The first 22 residues, 1 to 22 (MRHGHPRLLPGLLMLLLLPLGA), serve as a signal peptide directing secretion. Residues 23-540 (AAQKTSGCAR…MAHYDVQEED (518 aa)) lie on the Extracellular side of the membrane. The 43-residue stretch at 26 to 68 (KTSGCARWCPPKSTCVNATTCRCSPGFSSLSGEIFSSPLESCD) folds into the EGF-like 1 domain. 5 disulfides stabilise this stretch: Cys-30–Cys-40, Cys-34–Cys-46, Cys-48–Cys-67, Cys-73–Cys-87, and Cys-81–Cys-96. An N-linked (GlcNAc...) asparagine glycan is attached at Asn-42. The 40-residue stretch at 69–108 (DIDECGPPPLVSCGRLADCQNTEGSYHCMCSPGYALASGA) folds into the EGF-like 1; calcium-binding domain. Asn-113 carries N-linked (GlcNAc...) asparagine glycosylation. An EGF-like 2; calcium-binding domain is found at 121–159 (DVDECQLKPRVCKSRGICTNTKGSYTCKCPPGFELNLGD). Cystine bridges form between Cys-125–Cys-138, Cys-132–Cys-147, Cys-169–Cys-182, Cys-176–Cys-191, Cys-218–Cys-231, and Cys-225–Cys-240. Positions 165 to 203 (DVNECTSGQNPCHNSTHCLNNIGGYECRCRPGWKPVPGS) constitute an EGF-like 3; calcium-binding domain. N-linked (GlcNAc...) asparagine glycosylation occurs at Asn-178. Positions 214–253 (DVDECSSGKHTCHYSTVCINTVGSYKCRCRRGWKPKPRFQ) constitute an EGF-like 4; calcium-binding domain. Asn-258, Asn-348, Asn-361, and Asn-379 each carry an N-linked (GlcNAc...) asparagine glycan. The GAIN-B domain maps to 358–537 (WTFNASAGTD…AVLMAHYDVQ (180 aa)). Cystine bridges form between Cys-489–Cys-519 and Cys-507–Cys-521. Positions 489–537 (CVFWEHSQDECGHWSTRGCTVVDSGDTSTTCQCTHLSSFAVLMAHYDVQ) are GPS. The chain crosses the membrane as a helical span at residues 541-561 (LVLPVITYVGLGLSLLCLLLA). The Cytoplasmic portion of the chain corresponds to 562 to 576 (ALTFLLCKAIQNTST). The helical transmembrane segment at 577-597 (SLHLQLLICLFLAHLLFLMAI) threads the bilayer. The Extracellular portion of the chain corresponds to 598–603 (DRTEIK). The chain crosses the membrane as a helical span at residues 604–624 (VLCSIIAGALHYLYLASFTWM). The Cytoplasmic portion of the chain corresponds to 625–651 (LLEGLHLFLTARNLMVVNYSSVSMLMK). Residues 652–672 (KLMYPVGYGVPTLIVAISAAS) form a helical membrane-spanning segment. At 673-690 (RSHLYGTRTRCWLNPEER) the chain is on the extracellular side. A helical membrane pass occupies residues 691-711 (FIWSFLGPVCTIFSVNLGFFL). Topologically, residues 712 to 744 (MTLWILKSKLSSLNSDVSTLQNTRMLTFKAIAQ) are cytoplasmic. The helical transmembrane segment at 745–765 (LFILGCTWCLGILQVGPAAHV) threads the bilayer. Topologically, residues 766-767 (MA) are extracellular. A helical transmembrane segment spans residues 768-788 (YLFTIINSLQGVFIFLVYCLL). Over 789 to 830 (SQQVREEYGKWFKGIRKTRAESEKYTLSSRAMSDVNKPMMVN) the chain is Cytoplasmic.

Belongs to the G-protein coupled receptor 2 family. Adhesion G-protein coupled receptor (ADGR) subfamily. Forms a heterodimer, consisting of a large extracellular region non-covalently linked to a seven-transmembrane moiety. Interacts with chondroitin sulfate; the interaction with chondroitin sulfate is calcium-dependent. Interacts with CD55. Autoproteolytically cleaved into 2 subunits, an extracellular alpha subunit and a seven-transmembrane beta subunit.

The protein resides in the cell membrane. It localises to the cell projection. The protein localises to the ruffle membrane. Its function is as follows. Cell surface receptor that binds to the chondroitin sulfate moiety of glycosaminoglycan chains and promotes cell attachment. Promotes granulocyte chemotaxis, degranulation and adhesion. In macrophages, promotes the release of inflammatory cytokines, including IL8 and TNF. Signals probably through G-proteins. The sequence is that of Adhesion G protein-coupled receptor E2 (ADGRE2) from Canis lupus familiaris (Dog).